The chain runs to 425 residues: MNTLNDSLTAFDPDIAALIDGELRRQESGLEMIASENYAPLAVMQAQGSVLTNKYAEGYPGRRYYGGCEFVDGVEQLAIDRVKALFGAEYANVQPHSGATANAATMHALLNPGDTILGLSLAHGGHLTHGMRINFSGKLYHATAYEVSKEDYLVDMDAVAEAARTHRPKMIIAGWSAYPRQLDFARFRAIADEVDAVLMVDMAHFAGLVAAGVHPSPVPHAHVVTSTTHKTLGGPRGGIILCNDPAIAKKINSAVFPGQQGGPLGHVIAAKATAFKMAAQPEFAQRQQRCLDGARILAGRLTQPDVAERGIAVLTGGTDVHLVLVDLRDAELDGQQAEDRLAAVDITVNRNAVPFDPRPPMITSGLRIGTPALAARGFSHNDFRAVADLIAAALTATNDDQLGPLRAQVQRLAARYPLYPELHRT.

Residues Leu121 and 125 to 127 (GHL) each bind (6S)-5,6,7,8-tetrahydrofolate. The residue at position 230 (Lys230) is an N6-(pyridoxal phosphate)lysine.

Belongs to the SHMT family. Homodimer. Requires pyridoxal 5'-phosphate as cofactor.

It is found in the cytoplasm. The catalysed reaction is (6R)-5,10-methylene-5,6,7,8-tetrahydrofolate + glycine + H2O = (6S)-5,6,7,8-tetrahydrofolate + L-serine. Its pathway is one-carbon metabolism; tetrahydrofolate interconversion. The protein operates within amino-acid biosynthesis; glycine biosynthesis; glycine from L-serine: step 1/1. Its function is as follows. Catalyzes the reversible interconversion of serine and glycine with tetrahydrofolate (THF) serving as the one-carbon carrier. This reaction serves as the major source of one-carbon groups required for the biosynthesis of purines, thymidylate, methionine, and other important biomolecules. Also exhibits THF-independent aldolase activity toward beta-hydroxyamino acids, producing glycine and aldehydes, via a retro-aldol mechanism. The chain is Serine hydroxymethyltransferase 2 from Mycobacterium bovis (strain ATCC BAA-935 / AF2122/97).